The primary structure comprises 686 residues: Methionine--tRNA ligase (686 aa).

The 'HIGH' region signature appears at 22-32 (PYANGPIHLGH). Positions 153, 156, 166, and 169 each coordinate Zn(2+). Residues 337–341 (KMSKS) carry the 'KMSKS' region motif. An ATP-binding site is contributed by Lys-340. The tract at residues 547 to 573 (MLEDSKESTPAPAAAKPKKAATQKADA) is disordered. In terms of domain architecture, tRNA-binding spans 584–686 (DFLKVKLRVA…SGAEPGMEVR (103 aa)).

Belongs to the class-I aminoacyl-tRNA synthetase family. MetG type 1 subfamily. As to quaternary structure, homodimer. It depends on Zn(2+) as a cofactor.

It localises to the cytoplasm. It catalyses the reaction tRNA(Met) + L-methionine + ATP = L-methionyl-tRNA(Met) + AMP + diphosphate. Is required not only for elongation of protein synthesis but also for the initiation of all mRNA translation through initiator tRNA(fMet) aminoacylation. The protein is Methionine--tRNA ligase of Alcanivorax borkumensis (strain ATCC 700651 / DSM 11573 / NCIMB 13689 / SK2).